Here is a 271-residue protein sequence, read N- to C-terminus: Ribosomal RNA small subunit methyltransferase A (271 aa).

Residues Asn28, Leu30, Gly54, Glu75, Asp99, and Asn117 each coordinate S-adenosyl-L-methionine.

It belongs to the class I-like SAM-binding methyltransferase superfamily. rRNA adenine N(6)-methyltransferase family. RsmA subfamily.

Its subcellular location is the cytoplasm. It carries out the reaction adenosine(1518)/adenosine(1519) in 16S rRNA + 4 S-adenosyl-L-methionine = N(6)-dimethyladenosine(1518)/N(6)-dimethyladenosine(1519) in 16S rRNA + 4 S-adenosyl-L-homocysteine + 4 H(+). In terms of biological role, specifically dimethylates two adjacent adenosines (A1518 and A1519) in the loop of a conserved hairpin near the 3'-end of 16S rRNA in the 30S particle. May play a critical role in biogenesis of 30S subunits. The protein is Ribosomal RNA small subunit methyltransferase A of Thermus thermophilus (strain ATCC BAA-163 / DSM 7039 / HB27).